A 190-amino-acid polypeptide reads, in one-letter code: Ras-like GTP-binding protein RhoL (190 aa).

Residue 18–25 (GDGMVGKT) participates in GTP binding. Residues 40–48 (YIPTVFDNH) carry the Effector region motif. GTP contacts are provided by residues 65 to 69 (DTAGQ) and 123 to 126 (TKLD). At C187 the chain carries Cysteine methyl ester. Residue C187 is the site of S-geranylgeranyl cysteine attachment. A propeptide spans 188 to 190 (KIL) (removed in mature form).

Belongs to the small GTPase superfamily. Rho family. In terms of tissue distribution, highly expressed in the embryonic cephalic mesoderm starting from stage 6 and fading by stage 11. Hemocyte precursor cells.

It localises to the cell membrane. Functionally, essential for the maturation of hemocytes. The chain is Ras-like GTP-binding protein RhoL (RhoL) from Drosophila melanogaster (Fruit fly).